A 463-amino-acid polypeptide reads, in one-letter code: uncharacterized protein (463 aa).

The PE domain maps to 1 to 93; the sequence is MSYMIAVPDM…AGAYASAEAT (93 aa). Disordered stretches follow at residues 231-320 and 408-463; these read GGAG…AGNG and NGGD…TPGQ. The span at 408 to 451 shows a compositional bias: gly residues; the sequence is NGGDGGKGGDAQLIGNGGNGGNGGKGGTGLMPGINGTGGAGGSR.

This sequence belongs to the mycobacterial PE family. PGRS subfamily.

This is an uncharacterized protein from Mycobacterium tuberculosis (strain ATCC 25618 / H37Rv).